The following is a 194-amino-acid chain: Large ribosomal subunit protein bL25 (194 aa).

Belongs to the bacterial ribosomal protein bL25 family. CTC subfamily. As to quaternary structure, part of the 50S ribosomal subunit; part of the 5S rRNA/L5/L18/L25 subcomplex. Contacts the 5S rRNA. Binds to the 5S rRNA independently of L5 and L18.

This is one of the proteins that binds to the 5S RNA in the ribosome where it forms part of the central protuberance. The protein is Large ribosomal subunit protein bL25 of Geotalea uraniireducens (strain Rf4) (Geobacter uraniireducens).